A 246-amino-acid polypeptide reads, in one-letter code: Ribonuclease PH (246 aa).

Phosphate-binding positions include arginine 91 and 129-131; that span reads GTR.

The protein belongs to the RNase PH family. As to quaternary structure, homohexameric ring arranged as a trimer of dimers.

The catalysed reaction is tRNA(n+1) + phosphate = tRNA(n) + a ribonucleoside 5'-diphosphate. Functionally, phosphorolytic 3'-5' exoribonuclease that plays an important role in tRNA 3'-end maturation. Removes nucleotide residues following the 3'-CCA terminus of tRNAs; can also add nucleotides to the ends of RNA molecules by using nucleoside diphosphates as substrates, but this may not be physiologically important. Probably plays a role in initiation of 16S rRNA degradation (leading to ribosome degradation) during starvation. This chain is Ribonuclease PH, found in Burkholderia ambifaria (strain MC40-6).